A 371-amino-acid chain; its full sequence is Histidinol-phosphate aminotransferase (371 aa).

The residue at position 232 (lysine 232) is an N6-(pyridoxal phosphate)lysine.

This sequence belongs to the class-II pyridoxal-phosphate-dependent aminotransferase family. Histidinol-phosphate aminotransferase subfamily. In terms of assembly, homodimer. The cofactor is pyridoxal 5'-phosphate.

It catalyses the reaction L-histidinol phosphate + 2-oxoglutarate = 3-(imidazol-4-yl)-2-oxopropyl phosphate + L-glutamate. It participates in amino-acid biosynthesis; L-histidine biosynthesis; L-histidine from 5-phospho-alpha-D-ribose 1-diphosphate: step 7/9. This chain is Histidinol-phosphate aminotransferase, found in Methylibium petroleiphilum (strain ATCC BAA-1232 / LMG 22953 / PM1).